The following is a 322-amino-acid chain: Lactamase-like protein nscB (322 aa).

Zn(2+) is bound by residues histidine 97, histidine 99, aspartate 101, and histidine 102. Aspartate 101 functions as the Proton donor/acceptor in the catalytic mechanism.

Belongs to the metallo-beta-lactamase superfamily. Requires Zn(2+) as cofactor.

It participates in secondary metabolite biosynthesis. In terms of biological role, lactamase-like protein; part of the gene cluster that mediates the biosynthesis of neosartoricin B, a prenylated anthracenone that probably exhibits T-cell antiproliferative activity, suggestive of a physiological role as an immunosuppressive agent. The non-reducing polyketide synthase nscA probably synthesizes and cyclizes the decaketide backbone. The hydrolase nscB then mediates the product release through hydrolysis followed by spontaneous decarboxylation. The prenyltransferase nscD catalyzes the addition of the dimethylallyl group to the aromatic C5. The FAD-dependent monooxygenase nscC is then responsible for the stereospecific hydroxylation at C2. Neosartoricin B can be converted into two additional compounds neosartoricins C and D. Neosartoricin C is a spirocyclic compound that is cyclized through the attack of C3 hydroxyl on C14, followed by dehydration. On the other hand, neosartoricin D is a further cyclized compound in which attack of C2 on C14 in neosartoricin C results in the formation of the acetal-containing dioxabicyclo-octanone ring. Both of these compounds are novel and possibly represent related metabolites of the gene cluster. The sequence is that of Lactamase-like protein nscB from Trichophyton rubrum (strain ATCC MYA-4607 / CBS 118892) (Athlete's foot fungus).